The chain runs to 2155 residues: Alpha-tectorin (2155 aa).

The first 22 residues, 1–22 (MNYSSFLRIWVSFIFALVQHQA), serve as a signal peptide directing secretion. Asn34, Asn187, Asn215, Asn278, Asn455, Asn506, Asn528, and Asn560 each carry an N-linked (GlcNAc...) asparagine glycan. Residues 98-252 (PFWADVHNGI…GRWAFKVDGK (155 aa)) form the NIDO domain. Positions 260 to 314 (CTSRGQFLRRGEVFWDDLNCTVKCRCLDFNNEIYCQEASCSPYEVCEPKGKFFYC) constitute a VWFC domain. The region spanning 320–500 (STCVVFGEPH…RVYHADWKCD (181 aa)) is the VWFD 1 domain. 2 disulfides stabilise this stretch: Cys322–Cys461 and Cys344–Cys499. A TIL 1 domain is found at 597-650 (CPSFSHYSVCTSSCPDTCSDLTASRNCATPCTEGCECNQGFVLSTSQCVPLHKC). Residues Asn670, Asn687, Asn813, Asn843, Asn855, Asn898, Asn920, Asn931, and Asn949 are each glycosylated (N-linked (GlcNAc...) asparagine). Residues 711 to 886 (TVCLLSQNQV…SWTTFEEICN (176 aa)) form the VWFD 2 domain. Cysteines 713 and 849 form a disulfide. Residues 984-1036 (CPENSHFEECITCTETCETLTLGPICVDSCSEGCQCDEGYALLGSQCVTRSEC) enclose the TIL 2 domain. N-linked (GlcNAc...) asparagine glycosylation is found at Asn1048, Asn1235, and Asn1364. The VWFD 3 domain occupies 1098-1278 (ASCIVSGYGH…SWVKRDTFCQ (181 aa)). Disulfide bonds link Cys1100/Cys1241 and Cys1122/Cys1277. Residues 1372 to 1425 (CPPNSHYESCVSVCQPRCAAIRLKSDCSHYCVEGCHCDAGYVLNGKSCILPHSC) form the TIL 3 domain. The VWFD 4 domain occupies 1485–1666 (SYCLAAGGGV…QKRPLAPSCN (182 aa)). 7 disulfide bridges follow: Cys1487/Cys1622, Cys1509/Cys1665, Cys1717/Cys1775, Cys1741/Cys1784, Cys1786/Cys1818, Cys1806/Cys1898, and Cys1837/Cys1857. 10 N-linked (GlcNAc...) asparagine glycosylation sites follow: Asn1538, Asn1565, Asn1756, Asn1772, Asn1794, Asn1851, Asn1864, Asn1880, Asn1920, and Asn1939. Residues 1805-2059 (TCKAAQMEVS…YSCKITCPHN (255 aa)) form the ZP domain. 3 cysteine pairs are disulfide-bonded: Cys1980–Cys2040, Cys2001–Cys2056, and Cys2045–Cys2052. A lipid anchor (GPI-anchor amidated asparagine) is attached at Asn2091. Positions 2092–2155 (GGCEQICTSR…HFVYKSGTTS (64 aa)) are cleaved as a propeptide — removed in mature form.

May form homomeric filament after self-association or heteromeric filament after association with beta-tectorin. Interacts with CEACAM16. In terms of processing, the presence of a hydrophobic C-terminus preceded by a potential cleavage site strongly suggests that tectorins are synthesized as glycosylphosphatidylinositol-linked, membrane-bound precursors. Tectorins are targeted to the apical surface of the inner ear epithelia by the lipid and proteolytically released into the extracellular compartment.

The protein localises to the cell membrane. It localises to the secreted. It is found in the extracellular space. The protein resides in the extracellular matrix. In terms of biological role, one of the major non-collagenous components of the tectorial membrane. The tectorial membrane is an extracellular matrix of the inner ear that covers the neuroepithelium of the cochlea and contacts the stereocilia bundles of specialized sensory hair cells. Sound induces movement of these hair cells relative to the tectorial membrane, deflects the stereocilia and leads to fluctuations in hair-cell membrane potential, transducing sound into electrical signals. This is Alpha-tectorin (TECTA) from Homo sapiens (Human).